The primary structure comprises 244 residues: tRNA (guanine-N(1)-)-methyltransferase (244 aa).

Residues Gly114 and 134-139 (IGDYVL) contribute to the S-adenosyl-L-methionine site. The tract at residues 220–244 (RRPDLLEKAGASPGKSGSNFGKHDA) is disordered.

Belongs to the RNA methyltransferase TrmD family. Homodimer.

It is found in the cytoplasm. The enzyme catalyses guanosine(37) in tRNA + S-adenosyl-L-methionine = N(1)-methylguanosine(37) in tRNA + S-adenosyl-L-homocysteine + H(+). Specifically methylates guanosine-37 in various tRNAs. This chain is tRNA (guanine-N(1)-)-methyltransferase, found in Rhizobium johnstonii (strain DSM 114642 / LMG 32736 / 3841) (Rhizobium leguminosarum bv. viciae).